The following is a 44-amino-acid chain: Large ribosomal subunit protein P2 (44 aa).

Position 1 is an N-acetylmethionine (Met1). Phosphoserine is present on residues Ser17 and Ser19. Lys21 carries the post-translational modification N6-acetyllysine; alternate. Position 21 is an N6-succinyllysine; alternate (Lys21).

The protein belongs to the eukaryotic ribosomal protein P1/P2 family. In terms of assembly, heterodimer with RPLP1 at the lateral ribosomal stalk of the large ribosomal subunit. In terms of processing, phosphorylated.

Functionally, plays an important role in the elongation step of protein synthesis. The protein is Large ribosomal subunit protein P2 (RPLP2) of Oryctolagus cuniculus (Rabbit).